The sequence spans 658 residues: UvrABC system protein B (658 aa).

A Helicase ATP-binding domain is found at 25–414 (KSLKNNNHYQ…LSKKNVAEQI (390 aa)). 38-45 (GVTGSGKT) contributes to the ATP binding site. A Beta-hairpin motif is present at residues 91–114 (HFDYYQPESYIPRRDLFIEKDSSI). The Helicase C-terminal domain maps to 433–607 (QVQDLFDEIK…ELKLRDDEIR (175 aa)). The region spanning 623 to 658 (EKIIKELDKKMRECTKNLDFEEAMRLRDEIAQLRTL) is the UVR domain.

Belongs to the UvrB family. In terms of assembly, forms a heterotetramer with UvrA during the search for lesions. Interacts with UvrC in an incision complex.

Its subcellular location is the cytoplasm. Functionally, the UvrABC repair system catalyzes the recognition and processing of DNA lesions. A damage recognition complex composed of 2 UvrA and 2 UvrB subunits scans DNA for abnormalities. Upon binding of the UvrA(2)B(2) complex to a putative damaged site, the DNA wraps around one UvrB monomer. DNA wrap is dependent on ATP binding by UvrB and probably causes local melting of the DNA helix, facilitating insertion of UvrB beta-hairpin between the DNA strands. Then UvrB probes one DNA strand for the presence of a lesion. If a lesion is found the UvrA subunits dissociate and the UvrB-DNA preincision complex is formed. This complex is subsequently bound by UvrC and the second UvrB is released. If no lesion is found, the DNA wraps around the other UvrB subunit that will check the other stand for damage. This chain is UvrABC system protein B, found in Helicobacter pylori (strain ATCC 700392 / 26695) (Campylobacter pylori).